The following is a 262-amino-acid chain: Adenosylcobinamide-GDP ribazoletransferase (262 aa).

A run of 6 helical transmembrane segments spans residues 43-63 (YFGLVGLLIGLLSAIVFWLTQ), 66-86 (LPAGVSVLLAMLVGVLLTGGF), 120-140 (GAIALILALLLKWQLLVELAL), 146-166 (AGSALIVAHTVSRVVAASIIF), 191-211 (LFILVASGVLVLLFLKGLAAL), and 242-262 (AAQQICEIVCYLVLLIVGSIL).

The protein belongs to the CobS family. Mg(2+) is required as a cofactor.

Its subcellular location is the cell inner membrane. The catalysed reaction is alpha-ribazole + adenosylcob(III)inamide-GDP = adenosylcob(III)alamin + GMP + H(+). It carries out the reaction alpha-ribazole 5'-phosphate + adenosylcob(III)inamide-GDP = adenosylcob(III)alamin 5'-phosphate + GMP + H(+). Its pathway is cofactor biosynthesis; adenosylcobalamin biosynthesis; adenosylcobalamin from cob(II)yrinate a,c-diamide: step 7/7. Joins adenosylcobinamide-GDP and alpha-ribazole to generate adenosylcobalamin (Ado-cobalamin). Also synthesizes adenosylcobalamin 5'-phosphate from adenosylcobinamide-GDP and alpha-ribazole 5'-phosphate. The polypeptide is Adenosylcobinamide-GDP ribazoletransferase (Shewanella putrefaciens (strain CN-32 / ATCC BAA-453)).